Consider the following 302-residue polypeptide: Zinc finger protein-like 1 homolog (302 aa).

The B box-type; degenerate zinc finger occupies 1-43 (MGLCKCPKRLVTNQFCFEHRVNVCEHCMVQSHPKCIVQSYLQW). The RING-type; atypical zinc finger occupies 53–101 (CNLCGTSLEQGECVRLVCYHVFHWDCLNARQAALPANTAPRGHQCPGCS). A disordered region spans residues 168–233 (IHSGGERERG…RDDNKYQRRT (66 aa)). A compositionally biased stretch (polar residues) spans 198 to 208 (PPSSGDFNASS). Position 217 is a phosphoserine (Ser-217). Residues 258–278 (WFLVLSGILAFVMFIYLLAWM) form a helical membrane-spanning segment.

Belongs to the ZFPL1 family.

It localises to the membrane. This chain is Zinc finger protein-like 1 homolog, found in Drosophila pseudoobscura pseudoobscura (Fruit fly).